Consider the following 172-residue polypeptide: uncharacterized protein (172 aa).

Disordered regions lie at residues methionine 1 to asparagine 39 and aspartate 90 to asparagine 112. Over residues asparagine 98–serine 110 the composition is skewed to low complexity.

This is an uncharacterized protein from Dictyostelium discoideum (Social amoeba).